We begin with the raw amino-acid sequence, 341 residues long: DNA repair protein XRCC3 (341 aa).

Methionine 1 carries the post-translational modification N-acetylmethionine. ATP is bound at residue 107–114 (GRSSAGKT).

It belongs to the RecA family. RAD51 subfamily. In terms of assembly, interacts with RAD51C and RAD51. Part of the CX3 complex consisting of RAD51C and XRCC3; the complex has a ring-like structure arranged into a flat disc around a central channel; CX3 can interact with RAD51 in vitro. Forms a complex with FANCD2, BRCA2 and phosphorylated FANCG. Interacts with SWSAP1 and ZSWIM7; involved in homologous recombination repair. Interacts directly with PALB2 which may serve as a scaffold for a HR complex containing PALB2, BRCA2, RAD51C, RAD51 and XRCC3.

The protein resides in the nucleus. The protein localises to the cytoplasm. Its subcellular location is the perinuclear region. It is found in the mitochondrion matrix. Functionally, involved in the homologous recombination repair (HRR) pathway of double-stranded DNA, thought to repair chromosomal fragmentation, translocations and deletions. Part of the RAD21 paralog protein complex CX3 which acts in the BRCA1-BRCA2-dependent HR pathway. Upon DNA damage, CX3 acts downstream of RAD51 recruitment; the complex binds predominantly to the intersection of the four duplex arms of the Holliday junction (HJ) and to junctions of replication forks. Involved in HJ resolution and thus in processing HR intermediates late in the DNA repair process; the function may be linked to the CX3 complex and seems to involve GEN1 during mitotic cell cycle progression. Part of a PALB2-scaffolded HR complex containing BRCA2 and RAD51C and which is thought to play a role in DNA repair by HR. Plays a role in regulating mitochondrial DNA copy number under conditions of oxidative stress in the presence of RAD51 and RAD51C. The protein is DNA repair protein XRCC3 (XRCC3) of Bos taurus (Bovine).